Consider the following 145-residue polypeptide: D-aminoacyl-tRNA deacylase (145 aa).

Positions 137–138 match the Gly-cisPro motif, important for rejection of L-amino acids motif; it reads GP.

This sequence belongs to the DTD family. As to quaternary structure, homodimer.

It localises to the cytoplasm. The enzyme catalyses glycyl-tRNA(Ala) + H2O = tRNA(Ala) + glycine + H(+). The catalysed reaction is a D-aminoacyl-tRNA + H2O = a tRNA + a D-alpha-amino acid + H(+). An aminoacyl-tRNA editing enzyme that deacylates mischarged D-aminoacyl-tRNAs. Also deacylates mischarged glycyl-tRNA(Ala), protecting cells against glycine mischarging by AlaRS. Acts via tRNA-based rather than protein-based catalysis; rejects L-amino acids rather than detecting D-amino acids in the active site. By recycling D-aminoacyl-tRNA to D-amino acids and free tRNA molecules, this enzyme counteracts the toxicity associated with the formation of D-aminoacyl-tRNA entities in vivo and helps enforce protein L-homochirality. This is D-aminoacyl-tRNA deacylase from Pseudomonas syringae pv. tomato (strain ATCC BAA-871 / DC3000).